A 497-amino-acid chain; its full sequence is ATP synthase subunit alpha 2 (497 aa).

An ATP-binding site is contributed by 167–174 (GERATGKT).

This sequence belongs to the ATPase alpha/beta chains family. As to quaternary structure, F-type ATPases have 2 components, CF(1) - the catalytic core - and CF(0) - the membrane proton channel. CF(1) has five subunits: alpha(3), beta(3), gamma(1), delta(1), epsilon(1). CF(0) has four main subunits: a(1), b(1), b'(1) and c(9-12).

The protein localises to the cell inner membrane. It carries out the reaction ATP + H2O + 4 H(+)(in) = ADP + phosphate + 5 H(+)(out). Produces ATP from ADP in the presence of a proton gradient across the membrane. The alpha chain is a regulatory subunit. The polypeptide is ATP synthase subunit alpha 2 (Cereibacter sphaeroides (strain ATCC 17023 / DSM 158 / JCM 6121 / CCUG 31486 / LMG 2827 / NBRC 12203 / NCIMB 8253 / ATH 2.4.1.) (Rhodobacter sphaeroides)).